The chain runs to 458 residues: ATP synthase subunit beta 2 (458 aa).

148–155 (GGAGVGKT) is an ATP binding site.

This sequence belongs to the ATPase alpha/beta chains family. F-type ATPases have 2 components, CF(1) - the catalytic core - and CF(0) - the membrane proton channel. CF(1) has five subunits: alpha(3), beta(3), gamma(1), delta(1), epsilon(1). CF(0) has three main subunits: a(1), b(2) and c(9-12). The alpha and beta chains form an alternating ring which encloses part of the gamma chain. CF(1) is attached to CF(0) by a central stalk formed by the gamma and epsilon chains, while a peripheral stalk is formed by the delta and b chains.

It localises to the cell inner membrane. It catalyses the reaction ATP + H2O + 4 H(+)(in) = ADP + phosphate + 5 H(+)(out). Produces ATP from ADP in the presence of a proton gradient across the membrane. The catalytic sites are hosted primarily by the beta subunits. The chain is ATP synthase subunit beta 2 from Marinomonas sp. (strain MWYL1).